The primary structure comprises 406 residues: 2,3-bisphosphoglycerate-independent phosphoglycerate mutase (406 aa).

This sequence belongs to the BPG-independent phosphoglycerate mutase family. A-PGAM subfamily.

It carries out the reaction (2R)-2-phosphoglycerate = (2R)-3-phosphoglycerate. It participates in carbohydrate degradation; glycolysis; pyruvate from D-glyceraldehyde 3-phosphate: step 3/5. Catalyzes the interconversion of 2-phosphoglycerate and 3-phosphoglycerate. This is 2,3-bisphosphoglycerate-independent phosphoglycerate mutase from Methanococcus maripaludis (strain DSM 14266 / JCM 13030 / NBRC 101832 / S2 / LL).